We begin with the raw amino-acid sequence, 116 residues long: Large ribosomal subunit protein bL19 (116 aa).

The protein belongs to the bacterial ribosomal protein bL19 family.

Its function is as follows. This protein is located at the 30S-50S ribosomal subunit interface and may play a role in the structure and function of the aminoacyl-tRNA binding site. The chain is Large ribosomal subunit protein bL19 from Haemophilus ducreyi (strain 35000HP / ATCC 700724).